The following is a 403-amino-acid chain: Ribosomal RNA large subunit methyltransferase I (403 aa).

One can recognise a PUA domain in the interval 9 to 88 (YPRLVLSKGR…ESIDIAFFTR (80 aa)).

The protein belongs to the methyltransferase superfamily. RlmI family.

The protein localises to the cytoplasm. It catalyses the reaction cytidine(1962) in 23S rRNA + S-adenosyl-L-methionine = 5-methylcytidine(1962) in 23S rRNA + S-adenosyl-L-homocysteine + H(+). Its function is as follows. Specifically methylates the cytosine at position 1962 (m5C1962) of 23S rRNA. The polypeptide is Ribosomal RNA large subunit methyltransferase I (Salmonella typhi).